We begin with the raw amino-acid sequence, 403 residues long: Zinc metalloproteinase nas-8 (403 aa).

The signal sequence occupies residues 1-29; the sequence is MRRNDLLNNKITIFLSSLSLFVIIIPIYA. The propeptide occupies 30–111; that stretch reads AEKDLLPPST…DPKNSESLRR (82 aa). Residues 112–307 enclose the Peptidase M12A domain; it reads NGVITGTRKW…LKMNLMYQCS (196 aa). 5 cysteine pairs are disulfide-bonded: cysteine 154/cysteine 306, cysteine 176/cysteine 195, cysteine 338/cysteine 372, cysteine 345/cysteine 365, and cysteine 352/cysteine 369. Residue histidine 203 participates in Zn(2+) binding. The active site involves glutamate 204. Zn(2+) contacts are provided by histidine 207 and histidine 213. In terms of domain architecture, ShKT spans 338–372; that stretch reads CRDRTNLCWRWIDRCKSFFFEQIMKEFCSLSCGYC. Residue asparagine 386 is glycosylated (N-linked (GlcNAc...) asparagine).

Zn(2+) serves as cofactor.

It is found in the secreted. The enzyme catalyses Hydrolysis of peptide bonds in substrates containing five or more amino acids, preferentially with Ala in P1', and Pro in P2'.. Its function is as follows. Metalloprotease. In Caenorhabditis elegans, this protein is Zinc metalloproteinase nas-8 (nas-8).